The chain runs to 888 residues: Mitogen-activated protein kinase kinase kinase 12 (888 aa).

Positions 26–42 are enriched in basic and acidic residues; the sequence is MRKLDPDTSDCTPEKDL. The interval 26–104 is disordered; it reads MRKLDPDTSD…TGSPESRASR (79 aa). Threonine 37 and threonine 43 each carry phosphothreonine. A compositionally biased stretch (pro residues) spans 64-75; it reads SPSPGGEPPPEP. Positions 158-399 constitute a Protein kinase domain; the sequence is ILDLQWVGSG…FRQILLHLDI (242 aa). ATP is bound by residues 164-172 and lysine 185; that span reads VGSGAQGAV. Aspartate 269 functions as the Proton acceptor in the catalytic mechanism. 2 leucine-zipper regions span residues 423–444 and 476–497; these read VKLH…EEEL and LNAL…EQAL. The tract at residues 557 to 620 is disordered; it reads GVGLPGCPKA…GGLGVGPTAW (64 aa). Positions 572–584 are enriched in basic residues; sequence RSRRGKTRHRKAS. Residues 605-615 are compositionally biased toward gly residues; it reads GGLGSPGGLGV. Serine 640 is subject to Phosphoserine. Disordered stretches follow at residues 654–731 and 743–888; these read RGRG…YQHL and TRSQ…SLPP. The segment covering 704–725 has biased composition (gly residues); the sequence is PGEGVGLLGTGREGTTGRGGSR. Positions 752-763 are enriched in acidic residues; that stretch reads SEEEEGEVDSEV. 2 stretches are compositionally biased toward polar residues: residues 776-789 and 798-812; these read NMRQ…SENP and SEPS…GSTN. Basic and acidic residues predominate over residues 813–823; that stretch reads TDERPDERSDD.

Belongs to the protein kinase superfamily. STE Ser/Thr protein kinase family. MAP kinase kinase kinase subfamily. Homodimer. Interacts with MBIP. Mg(2+) is required as a cofactor. Autophosphorylated on Ser/Thr. Phosphorylated in cytosol under basal conditions and dephosphorylated when membrane-associated. In terms of processing, the activity of MAP3K12 can be regulated through its proteasomal degradation. APOE, through a receptor-mediated mechanism, activates MAP3K12 by preventing its proteasomal degradation.

The protein localises to the cytoplasm. The protein resides in the cell membrane. The catalysed reaction is L-seryl-[protein] + ATP = O-phospho-L-seryl-[protein] + ADP + H(+). It carries out the reaction L-threonyl-[protein] + ATP = O-phospho-L-threonyl-[protein] + ADP + H(+). Its function is as follows. Part of a non-canonical MAPK signaling pathway. Activated by APOE, enhances the AP-1-mediated transcription of APP, via a MAP kinase signal transduction pathway composed of MAP2K7 and MAPK1/ERK2 and MAPK3/ERK1. May be an activator of the JNK/SAPK pathway. In Rattus norvegicus (Rat), this protein is Mitogen-activated protein kinase kinase kinase 12 (Map3k12).